The following is a 145-amino-acid chain: MVYIVVLIVILLDQMVKLLVMEKMKVSESIPIIKDVFHLTYVQNRGAAFGILPGRRYLFIVITVVVISFLLIYYYKTRGSGMVTLSTGLIIGGALGNLIDRIRFGYVVDYLDFRIWPVFNLADSSVVIGAALLILYLWQQEKVGD.

A run of 3 helical transmembrane segments spans residues 1 to 21, 57 to 77, and 79 to 99; these read MVYI…LLVM, YLFI…YYKT, and GSGM…GNLI. Active-site residues include Asp109 and Asp123. Residues 115–135 traverse the membrane as a helical segment; it reads IWPVFNLADSSVVIGAALLIL.

The protein belongs to the peptidase A8 family.

The protein resides in the cell inner membrane. The catalysed reaction is Release of signal peptides from bacterial membrane prolipoproteins. Hydrolyzes -Xaa-Yaa-Zaa-|-(S,diacylglyceryl)Cys-, in which Xaa is hydrophobic (preferably Leu), and Yaa (Ala or Ser) and Zaa (Gly or Ala) have small, neutral side chains.. It participates in protein modification; lipoprotein biosynthesis (signal peptide cleavage). This protein specifically catalyzes the removal of signal peptides from prolipoproteins. The protein is Lipoprotein signal peptidase of Halothermothrix orenii (strain H 168 / OCM 544 / DSM 9562).